The chain runs to 278 residues: Dermonecrotic toxin Ls4SicTox-alphaIII1ii (278 aa).

The active site involves histidine 5. Mg(2+) is bound by residues glutamate 25 and aspartate 27. Histidine 40 acts as the Nucleophile in catalysis. Cysteine 44 and cysteine 50 are disulfide-bonded. Residue aspartate 84 participates in Mg(2+) binding.

Belongs to the arthropod phospholipase D family. Class I subfamily. Mg(2+) is required as a cofactor. Expressed by the venom gland.

Its subcellular location is the secreted. The enzyme catalyses an N-(acyl)-sphingosylphosphocholine = an N-(acyl)-sphingosyl-1,3-cyclic phosphate + choline. It catalyses the reaction an N-(acyl)-sphingosylphosphoethanolamine = an N-(acyl)-sphingosyl-1,3-cyclic phosphate + ethanolamine. It carries out the reaction a 1-acyl-sn-glycero-3-phosphocholine = a 1-acyl-sn-glycero-2,3-cyclic phosphate + choline. The catalysed reaction is a 1-acyl-sn-glycero-3-phosphoethanolamine = a 1-acyl-sn-glycero-2,3-cyclic phosphate + ethanolamine. Functionally, dermonecrotic toxins cleave the phosphodiester linkage between the phosphate and headgroup of certain phospholipids (sphingolipid and lysolipid substrates), forming an alcohol (often choline) and a cyclic phosphate. This toxin acts on sphingomyelin (SM). It may also act on ceramide phosphoethanolamine (CPE), lysophosphatidylcholine (LPC) and lysophosphatidylethanolamine (LPE), but not on lysophosphatidylserine (LPS), and lysophosphatidylglycerol (LPG). It acts by transphosphatidylation, releasing exclusively cyclic phosphate products as second products. Induces dermonecrosis, hemolysis, increased vascular permeability, edema, inflammatory response, and platelet aggregation. The polypeptide is Dermonecrotic toxin Ls4SicTox-alphaIII1ii (Loxosceles sp. (strain 4 GJB-2008) (Recluse spider)).